Consider the following 379-residue polypeptide: UDP-N-acetylglucosamine--N-acetylmuramyl-(pentapeptide) pyrophosphoryl-undecaprenol N-acetylglucosamine transferase (379 aa).

UDP-N-acetyl-alpha-D-glucosamine is bound by residues 17-19, N128, R169, S197, and Q298; that span reads TGG.

The protein belongs to the glycosyltransferase 28 family. MurG subfamily.

The protein resides in the cell inner membrane. It catalyses the reaction di-trans,octa-cis-undecaprenyl diphospho-N-acetyl-alpha-D-muramoyl-L-alanyl-D-glutamyl-meso-2,6-diaminopimeloyl-D-alanyl-D-alanine + UDP-N-acetyl-alpha-D-glucosamine = di-trans,octa-cis-undecaprenyl diphospho-[N-acetyl-alpha-D-glucosaminyl-(1-&gt;4)]-N-acetyl-alpha-D-muramoyl-L-alanyl-D-glutamyl-meso-2,6-diaminopimeloyl-D-alanyl-D-alanine + UDP + H(+). The protein operates within cell wall biogenesis; peptidoglycan biosynthesis. Functionally, cell wall formation. Catalyzes the transfer of a GlcNAc subunit on undecaprenyl-pyrophosphoryl-MurNAc-pentapeptide (lipid intermediate I) to form undecaprenyl-pyrophosphoryl-MurNAc-(pentapeptide)GlcNAc (lipid intermediate II). This Brucella abortus (strain S19) protein is UDP-N-acetylglucosamine--N-acetylmuramyl-(pentapeptide) pyrophosphoryl-undecaprenol N-acetylglucosamine transferase.